The chain runs to 465 residues: Ribulose bisphosphate carboxylase large chain (465 aa).

Lys4 is modified (N6,N6,N6-trimethyllysine). Asn113 and Thr163 together coordinate substrate. Lys165 acts as the Proton acceptor in catalysis. Position 167 (Lys167) interacts with substrate. 3 residues coordinate Mg(2+): Lys191, Asp193, and Glu194. Residue Lys191 is modified to N6-carboxylysine. His284 (proton acceptor) is an active-site residue. Residues Arg285, His317, and Ser369 each coordinate substrate.

It belongs to the RuBisCO large chain family. Type I subfamily. In terms of assembly, heterohexadecamer of 8 large chains and 8 small chains; disulfide-linked. The disulfide link is formed within the large subunit homodimers. The cofactor is Mg(2+). Post-translationally, the disulfide bond which can form in the large chain dimeric partners within the hexadecamer appears to be associated with oxidative stress and protein turnover.

The protein resides in the plastid. Its subcellular location is the chloroplast. The enzyme catalyses 2 (2R)-3-phosphoglycerate + 2 H(+) = D-ribulose 1,5-bisphosphate + CO2 + H2O. The catalysed reaction is D-ribulose 1,5-bisphosphate + O2 = 2-phosphoglycolate + (2R)-3-phosphoglycerate + 2 H(+). In terms of biological role, ruBisCO catalyzes two reactions: the carboxylation of D-ribulose 1,5-bisphosphate, the primary event in carbon dioxide fixation, as well as the oxidative fragmentation of the pentose substrate in the photorespiration process. Both reactions occur simultaneously and in competition at the same active site. The polypeptide is Ribulose bisphosphate carboxylase large chain (Eucommia ulmoides (Hardy rubber tree)).